We begin with the raw amino-acid sequence, 136 residues long: ATP synthase epsilon chain (136 aa).

A disordered region spans residues 95 to 115 (DFSEAQSRLEEANKGSDRREQ). Positions 101–115 (SRLEEANKGSDRREQ) are enriched in basic and acidic residues.

This sequence belongs to the ATPase epsilon chain family. In terms of assembly, F-type ATPases have 2 components, CF(1) - the catalytic core - and CF(0) - the membrane proton channel. CF(1) has five subunits: alpha(3), beta(3), gamma(1), delta(1), epsilon(1). CF(0) has three main subunits: a, b and c.

It is found in the cellular thylakoid membrane. Functionally, produces ATP from ADP in the presence of a proton gradient across the membrane. The polypeptide is ATP synthase epsilon chain (Rippkaea orientalis (strain PCC 8801 / RF-1) (Cyanothece sp. (strain PCC 8801))).